Reading from the N-terminus, the 408-residue chain is Peptidase T (408 aa).

Histidine 78 provides a ligand contact to Zn(2+). Residue aspartate 80 is part of the active site. Aspartate 141 contacts Zn(2+). Glutamate 175 serves as the catalytic Proton acceptor. The Zn(2+) site is built by glutamate 176, aspartate 198, and histidine 380.

This sequence belongs to the peptidase M20B family. Zn(2+) serves as cofactor.

The protein localises to the cytoplasm. It carries out the reaction Release of the N-terminal residue from a tripeptide.. Functionally, cleaves the N-terminal amino acid of tripeptides. The sequence is that of Peptidase T from Halothermothrix orenii (strain H 168 / OCM 544 / DSM 9562).